Reading from the N-terminus, the 457-residue chain is Exodeoxyribonuclease 7 large subunit (457 aa).

This sequence belongs to the XseA family. Heterooligomer composed of large and small subunits.

The protein resides in the cytoplasm. It catalyses the reaction Exonucleolytic cleavage in either 5'- to 3'- or 3'- to 5'-direction to yield nucleoside 5'-phosphates.. Its function is as follows. Bidirectionally degrades single-stranded DNA into large acid-insoluble oligonucleotides, which are then degraded further into small acid-soluble oligonucleotides. This is Exodeoxyribonuclease 7 large subunit from Photorhabdus laumondii subsp. laumondii (strain DSM 15139 / CIP 105565 / TT01) (Photorhabdus luminescens subsp. laumondii).